Consider the following 310-residue polypeptide: Aspartate carbamoyltransferase catalytic subunit (310 aa).

Carbamoyl phosphate contacts are provided by R58 and T59. K86 is a binding site for L-aspartate. R108, H136, and Q139 together coordinate carbamoyl phosphate. L-aspartate-binding residues include R169 and R224. Positions 265 and 266 each coordinate carbamoyl phosphate.

This sequence belongs to the aspartate/ornithine carbamoyltransferase superfamily. ATCase family. In terms of assembly, heterododecamer (2C3:3R2) of six catalytic PyrB chains organized as two trimers (C3), and six regulatory PyrI chains organized as three dimers (R2).

The enzyme catalyses carbamoyl phosphate + L-aspartate = N-carbamoyl-L-aspartate + phosphate + H(+). Its pathway is pyrimidine metabolism; UMP biosynthesis via de novo pathway; (S)-dihydroorotate from bicarbonate: step 2/3. Functionally, catalyzes the condensation of carbamoyl phosphate and aspartate to form carbamoyl aspartate and inorganic phosphate, the committed step in the de novo pyrimidine nucleotide biosynthesis pathway. The sequence is that of Aspartate carbamoyltransferase catalytic subunit from Geobacter sp. (strain M21).